A 108-amino-acid chain; its full sequence is Nucleoid-associated protein CPS_3743 (108 aa).

Residues 87 to 108 (NKDKMGALTGGMQLPPGMKMPF) are disordered.

This sequence belongs to the YbaB/EbfC family. Homodimer.

It localises to the cytoplasm. Its subcellular location is the nucleoid. Its function is as follows. Binds to DNA and alters its conformation. May be involved in regulation of gene expression, nucleoid organization and DNA protection. In Colwellia psychrerythraea (strain 34H / ATCC BAA-681) (Vibrio psychroerythus), this protein is Nucleoid-associated protein CPS_3743.